The following is a 568-amino-acid chain: Oxygen-dependent choline dehydrogenase (568 aa).

Aspartate 6–glutamate 35 is a binding site for FAD. The active-site Proton acceptor is the histidine 470.

The protein belongs to the GMC oxidoreductase family. Requires FAD as cofactor.

The enzyme catalyses choline + A = betaine aldehyde + AH2. It carries out the reaction betaine aldehyde + NAD(+) + H2O = glycine betaine + NADH + 2 H(+). It participates in amine and polyamine biosynthesis; betaine biosynthesis via choline pathway; betaine aldehyde from choline (cytochrome c reductase route): step 1/1. Functionally, involved in the biosynthesis of the osmoprotectant glycine betaine. Catalyzes the oxidation of choline to betaine aldehyde and betaine aldehyde to glycine betaine at the same rate. This Photobacterium profundum (strain SS9) protein is Oxygen-dependent choline dehydrogenase.